The primary structure comprises 308 residues: Carbamate kinase (308 aa).

It belongs to the carbamate kinase family.

It localises to the cytoplasm. The enzyme catalyses hydrogencarbonate + NH4(+) + ATP = carbamoyl phosphate + ADP + H2O + H(+). The sequence is that of Carbamate kinase from Synechocystis sp. (strain ATCC 27184 / PCC 6803 / Kazusa).